A 495-amino-acid polypeptide reads, in one-letter code: F(420)H(2) dehydrogenase subunit M (495 aa).

15 consecutive transmembrane segments (helical) span residues 1 to 21 (MLPV…VTFF), 27 to 47 (LAAG…LYAY), 57 to 77 (MQFY…SVGI), 80 to 100 (VSMP…LFTW), 108 to 128 (NRFY…FVAL), 130 to 150 (FVVF…IVNL), 163 to 183 (FFIY…GLFY), 215 to 235 (IFLA…FHSW), 249 to 269 (ILFI…LPML), 277 to 297 (LMIM…ALLA), 315 to 335 (MGYV…GAMF), 338 to 358 (FSHG…QTAA), 378 to 398 (VAMM…GFIA), 412 to 432 (VFVV…LWAM), and 450 to 470 (INSI…YFGL).

The protein belongs to the complex I subunit 4 family. As to quaternary structure, the FPO complex is composed of at least 13 different subunits. FpoA, FpoH, FpoJ, FpoK, FpoL, FpoM and FpoN proteins constitute the membrane sector of the complex.

It localises to the cell membrane. It catalyses the reaction methanophenazine + reduced coenzyme F420-(gamma-L-Glu)(n) = dihydromethanophenazine + oxidized coenzyme F420-(gamma-L-Glu)(n) + H(+). Its function is as follows. Component of the F(420)H(2) dehydrogenase (FPO complex) which is part of the energy-conserving F(420)H(2):heterodisulfide oxidoreductase system. The membrane-bound electron transfer system of the complex plays an important role in the metabolism of methylotrophic methanogens when the organisms grow on methanol or methylamines. Catalyzes the oxidation of methanophenazine to dihydromethanophenazine. It shuttles electrons from F(420)H(2), via FAD and iron-sulfur (Fe-S) centers, to methanophenazine (an electron carrier in the membrane). It couples the redox reaction to proton translocation (for every two electrons transferred, two hydrogen ions are translocated across the cytoplasmic membrane), and thus conserves the redox energy in a proton gradient. It also catalyzes the oxidation of F(420)H(2) with quinones such as 2,3-dimethyl-1,4-naphthoquinone, 2-methyl-1,4-naphthoquinone and tetramethyl-p-benzoquinone. This Methanosarcina mazei (strain ATCC BAA-159 / DSM 3647 / Goe1 / Go1 / JCM 11833 / OCM 88) (Methanosarcina frisia) protein is F(420)H(2) dehydrogenase subunit M (fpoM).